The following is a 1573-amino-acid chain: Soluble scavenger receptor cysteine-rich domain-containing protein SSC5D (1573 aa).

Positions 1–16 (MRVLACLLAALVGIQA) are cleaved as a signal peptide. One can recognise an SRCR 1 domain in the interval 20 to 120 (LRLADGPHGC…HEEDAGVVCA (101 aa)). 3 cysteine pairs are disulfide-bonded: Cys45–Cys109, Cys58–Cys119, and Cys89–Cys99. Residues 153–192 (EPLVTHAPRPAGNPQNASRKKSPRPKQAKSTRAPLLTTGA) are disordered. Asn168 is a glycosylation site (N-linked (GlcNAc...) asparagine). Positions 170–181 (SRKKSPRPKQAK) are enriched in basic residues. SRCR domains lie at 198–298 (LRLV…LVCT) and 304–404 (LRLA…AVCD). 6 cysteine pairs are disulfide-bonded: Cys223/Cys287, Cys236/Cys297, Cys267/Cys277, Cys329/Cys393, Cys342/Cys403, and Cys373/Cys383. Residues Asn376 and Asn420 are each glycosylated (N-linked (GlcNAc...) asparagine). Residues 412 to 465 (PPTAPTDSNNSTPREAASRPPSTMTSQAPGTAGVSPPPASPTVLWEPGPEAGSP) form a disordered region. The segment covering 431 to 440 (PPSTMTSQAP) has biased composition (polar residues). The region spanning 467–568 (LRLVAGPSKC…HNEDVGVTCT (102 aa)) is the SRCR 4 domain. 3 disulfides stabilise this stretch: Cys492–Cys557, Cys505–Cys567, and Cys537–Cys547. A disordered region spans residues 614–769 (EKTTTKAPGK…SVSTTGESGL (156 aa)). Residues 626–637 (KSTKKWVTKNAK) show a composition bias toward basic residues. Polar residues predominate over residues 654 to 671 (AQSPPDLTSQTTAALTTE). Basic and acidic residues predominate over residues 672–685 (ASRRPTSEFTRRPT). Composition is skewed to polar residues over residues 687–702 (EAPQ…TLTP) and 711–735 (KTMA…SIPQ). The SRCR 5 domain maps to 772–872 (VRLADGPNRC…HEEDVGLTCT (101 aa)). Cystine bridges form between Cys797-Cys861, Cys810-Cys871, and Cys841-Cys851. 2 disordered regions span residues 895–1475 (KGTT…PCVA) and 1554–1573 (MPAP…RGDV). Over residues 924–934 (RLPDTGSKDGY) the composition is skewed to basic and acidic residues. 2 stretches are compositionally biased toward pro residues: residues 1004–1020 (PPTP…PPGP) and 1083–1093 (TPEPSPTPLPT). A compositionally biased stretch (polar residues) spans 1101 to 1140 (DPSTPSEVTSLSPTSEQVPESDTTPDLDTTPYSSTVSEYS). Pro residues predominate over residues 1144–1160 (DPSPSPHPTTTPDPTMA). Low complexity-rich tracts occupy residues 1161-1175 (PDPI…TPHF) and 1185-1277 (PHPT…MPHP). Over residues 1278–1328 (TTTPHPTTTPHPTTTPHPTTTPHPTMTPDPTTTPYPTTTPDPTTTPHPTTP) the composition is skewed to pro residues. Composition is skewed to polar residues over residues 1335 to 1354 (VITT…SPTL) and 1364 to 1380 (PQLT…TSQI). A compositionally biased stretch (low complexity) spans 1381–1401 (PTLEPSPALESSPSRSSTATS). Residues 1464 to 1475 (GQSPGPHGPCVA) are compositionally biased toward pro residues.

As to quaternary structure, interacts with LGALS1 and laminin. In terms of tissue distribution, highly expressed in monocytes/macrophages and T-lymphocytes. Highly expressed in placenta and spleen, and also detected at lower levels in colon, and more weakly in lung, heart and kidney.

Its subcellular location is the secreted. The protein resides in the cytoplasm. In terms of biological role, binds to extracellular matrix proteins. Binds to pathogen-associated molecular patterns (PAMPs) present on the cell walls of Gram-positive and Gram-negative bacteria and fungi, behaving as a pattern recognition receptor (PRR). Induces bacterial and fungal aggregation and subsequent inhibition of PAMP-induced cytokine release. Does not possess intrinsic bactericidal activity. May play a role in the innate defense and homeostasis of certain epithelial surfaces. The protein is Soluble scavenger receptor cysteine-rich domain-containing protein SSC5D (SSC5D) of Homo sapiens (Human).